A 690-amino-acid chain; its full sequence is Protein-glucosylgalactosylhydroxylysine glucosidase (690 aa).

Position 299-300 (Trp299–Asp300) interacts with substrate. Glu429 serves as the catalytic Proton donor. Lys497 to Gln498 contacts substrate.

The protein belongs to the glycosyl hydrolase 65 family.

It carries out the reaction (5R)-5-O-[alpha-D-glucosyl-(1-&gt;2)-beta-D-galactosyl]-5-hydroxy-L-lysyl-[collagen] + H2O = (5R)-5-O-(beta-D-galactosyl)-5-hydroxy-L-lysyl-[collagen] + D-glucose. Functionally, catalyzes the hydrolysis of glucose from the disaccharide unit linked to hydroxylysine residues of collagen and collagen-like proteins. The polypeptide is Protein-glucosylgalactosylhydroxylysine glucosidase (Mus musculus (Mouse)).